A 233-amino-acid polypeptide reads, in one-letter code: Probable fimbrial chaperone protein ElfD (233 aa).

An N-terminal signal peptide occupies residues M1–A26.

The protein belongs to the periplasmic pilus chaperone family.

It localises to the periplasm. Part of the elfADCG fimbrial operon, which could be required for adherence to host epithelial cells. Could be required for the biogenesis of the ElfA fimbriae. This is Probable fimbrial chaperone protein ElfD (elfD) from Escherichia coli O157:H7.